A 267-amino-acid chain; its full sequence is Diphthine--ammonia ligase (267 aa).

Phosphotyrosine is present on tyrosine 97.

The protein belongs to the Diphthine--ammonia ligase family.

The catalysed reaction is diphthine-[translation elongation factor 2] + NH4(+) + ATP = diphthamide-[translation elongation factor 2] + AMP + diphosphate + H(+). The protein operates within protein modification; peptidyl-diphthamide biosynthesis. Amidase that catalyzes the last step of diphthamide biosynthesis using ammonium and ATP. Diphthamide biosynthesis consists in the conversion of an L-histidine residue in the translation elongation factor eEF-2 (EEF2) to diphthamide. This chain is Diphthine--ammonia ligase (DPH6), found in Bos taurus (Bovine).